The primary structure comprises 112 residues: DNA-binding protein TGAM_1196 (112 aa).

This sequence belongs to the PDCD5 family.

The polypeptide is DNA-binding protein TGAM_1196 (Thermococcus gammatolerans (strain DSM 15229 / JCM 11827 / EJ3)).